The primary structure comprises 507 residues: ATP synthase subunit alpha, plastid (507 aa).

170 to 177 (GDRQTGKT) is a binding site for ATP.

The protein belongs to the ATPase alpha/beta chains family. F-type ATPases have 2 components, CF(1) - the catalytic core - and CF(0) - the membrane proton channel. CF(1) has five subunits: alpha(3), beta(3), gamma(1), delta(1), epsilon(1). CF(0) has four main subunits: a, b, b' and c.

It is found in the plastid membrane. The catalysed reaction is ATP + H2O + 4 H(+)(in) = ADP + phosphate + 5 H(+)(out). Its function is as follows. Produces ATP from ADP in the presence of a proton gradient across the membrane. The alpha chain is a regulatory subunit. This Aneura mirabilis (Parasitic liverwort) protein is ATP synthase subunit alpha, plastid.